Consider the following 417-residue polypeptide: COP9 signalosome complex subunit 7a (417 aa).

A PCI domain is found at 2–179 (EQTKALNALE…EMVQINSVAA (178 aa)). A disordered region spans residues 240-417 (DEQKGAVPSS…KRGSKRKLTA (178 aa)). The segment covering 263 to 290 (RGGGGGGDGAGAGGSFRGSGYSRGGGLS) has biased composition (gly residues). Composition is skewed to low complexity over residues 291 to 311 (QGYR…SRQQ), 320 to 330 (SNQSGTNSLLT), and 343 to 352 (PSAVSPSAAA). The segment covering 367 to 379 (METGSGSGSGPLG) has biased composition (gly residues). Positions 385 to 405 (DMDDSEEDIDDDTMDLDDEGD) are enriched in acidic residues.

The protein belongs to the CSN7/EIF3M family. CSN7 subfamily. Component of the COP9 signalosome (CSN) complex.

It is found in the cytoplasm. The protein resides in the nucleus. Its function is as follows. Component of the COP9 signalosome (CSN) complex that acts as an regulator of the ubiquitin (Ubl) conjugation pathway by mediating the deneddylation of the cullin subunit of SCF-type E3 ubiquitin-protein ligase complexes. The CSN complex is involved in the regulation of the circadian clock through its control of the stability of the SCF(FWD1) complex. The protein is COP9 signalosome complex subunit 7a (csn-7a) of Neurospora crassa (strain ATCC 24698 / 74-OR23-1A / CBS 708.71 / DSM 1257 / FGSC 987).